The primary structure comprises 514 residues: Peptide chain release factor 3 (514 aa).

Residues 8–268 enclose the tr-type G domain; sequence KKRRTFAIIS…TFLKFAPEPH (261 aa). GTP is bound by residues 17 to 24, 85 to 89, and 139 to 142; these read SHPDAGKT, DTPGH, and NKLD.

Belongs to the TRAFAC class translation factor GTPase superfamily. Classic translation factor GTPase family. PrfC subfamily.

The protein resides in the cytoplasm. In terms of biological role, increases the formation of ribosomal termination complexes and stimulates activities of RF-1 and RF-2. It binds guanine nucleotides and has strong preference for UGA stop codons. It may interact directly with the ribosome. The stimulation of RF-1 and RF-2 is significantly reduced by GTP and GDP, but not by GMP. The chain is Peptide chain release factor 3 from Streptococcus pneumoniae serotype 19F (strain G54).